Here is a 362-residue protein sequence, read N- to C-terminus: Ribosomal RNA large subunit methyltransferase M (362 aa).

Residues Ser-187, 220-223, Asp-239, Asp-259, and Asp-276 each bind S-adenosyl-L-methionine; that span reads CPGG. The active-site Proton acceptor is the Lys-305.

The protein belongs to the class I-like SAM-binding methyltransferase superfamily. RNA methyltransferase RlmE family. RlmM subfamily. Monomer.

It localises to the cytoplasm. It catalyses the reaction cytidine(2498) in 23S rRNA + S-adenosyl-L-methionine = 2'-O-methylcytidine(2498) in 23S rRNA + S-adenosyl-L-homocysteine + H(+). In terms of biological role, catalyzes the 2'-O-methylation at nucleotide C2498 in 23S rRNA. The chain is Ribosomal RNA large subunit methyltransferase M from Shewanella frigidimarina (strain NCIMB 400).